The following is a 207-amino-acid chain: Ribonuclease HII (207 aa).

In terms of domain architecture, RNase H type-2 spans 18–207; the sequence is TYLSGSDEAG…PIKKISKETS (190 aa). The a divalent metal cation site is built by Asp24, Glu25, and Asp116.

It belongs to the RNase HII family. Mn(2+) is required as a cofactor. The cofactor is Mg(2+).

The protein resides in the cytoplasm. It carries out the reaction Endonucleolytic cleavage to 5'-phosphomonoester.. In terms of biological role, endonuclease that specifically degrades the RNA of RNA-DNA hybrids. This Mycoplasma capricolum subsp. capricolum (strain California kid / ATCC 27343 / NCTC 10154) protein is Ribonuclease HII.